The chain runs to 310 residues: Mitogen-activated protein kinase kinase 9 (310 aa).

A Protein kinase domain is found at 47-306; that stretch reads LEKLNVLGCG…APQLLAHPFL (260 aa). ATP is bound by residues 53 to 61 and Lys-76; that span reads LGCGNGGIV. Asp-167 acts as the Proton acceptor in catalysis. Phosphoserine occurs at positions 195 and 201. Phosphothreonine is present on Thr-205.

This sequence belongs to the protein kinase superfamily. STE Ser/Thr protein kinase family. MAP kinase kinase subfamily. Post-translationally, phosphorylation at Ser-195 and Ser-201 by MAP kinase kinase kinases positively regulates kinase activity. Autophosphorylated.

The protein localises to the cytoplasm. Its subcellular location is the nucleus. It catalyses the reaction L-seryl-[protein] + ATP = O-phospho-L-seryl-[protein] + ADP + H(+). It carries out the reaction L-threonyl-[protein] + ATP = O-phospho-L-threonyl-[protein] + ADP + H(+). The catalysed reaction is L-tyrosyl-[protein] + ATP = O-phospho-L-tyrosyl-[protein] + ADP + H(+). MKK9-MPK3/MPK6 module phosphorylates and activates EIN3, leading to the promotion of EIN3-mediated transcription in ethylene signaling. Autophosphorylates and also phosphorylates MPK3 and MPK6. Plays an important role in ethylene and camalexin biosynthesis and in salt stress response. MKK9-MPK6 module positively regulates leaf senescence. The polypeptide is Mitogen-activated protein kinase kinase 9 (MKK9) (Arabidopsis thaliana (Mouse-ear cress)).